A 193-amino-acid polypeptide reads, in one-letter code: Large ribosomal subunit protein eL19A (193 aa).

The segment at 156 to 179 is disordered; it reads QEQQDARRARAKAARQRRAKAVEE. Positions 164–174 are enriched in basic residues; that stretch reads ARAKAARQRRA.

The protein belongs to the eukaryotic ribosomal protein eL19 family. In terms of assembly, component of the large ribosomal subunit (LSU). Mature yeast ribosomes consist of a small (40S) and a large (60S) subunit. The 40S small subunit contains 1 molecule of ribosomal RNA (18S rRNA) and at least 33 different proteins. The large 60S subunit contains 3 rRNA molecules (25S, 5.8S and 5S rRNA) and at least 46 different proteins. eL19 lies in close proximity to the binding site for eukaryotic initiation factor eIF4G.

It localises to the cytoplasm. Its function is as follows. Component of the ribosome, a large ribonucleoprotein complex responsible for the synthesis of proteins in the cell. The small ribosomal subunit (SSU) binds messenger RNAs (mRNAs) and translates the encoded message by selecting cognate aminoacyl-transfer RNA (tRNA) molecules. The large subunit (LSU) contains the ribosomal catalytic site termed the peptidyl transferase center (PTC), which catalyzes the formation of peptide bonds, thereby polymerizing the amino acids delivered by tRNAs into a polypeptide chain. The nascent polypeptides leave the ribosome through a tunnel in the LSU and interact with protein factors that function in enzymatic processing, targeting, and the membrane insertion of nascent chains at the exit of the ribosomal tunnel. eL19 may play a role in the last stages of translation initiation, in particular subunit joining and shedding/releasing factors. The chain is Large ribosomal subunit protein eL19A (rpl1901) from Schizosaccharomyces pombe (strain 972 / ATCC 24843) (Fission yeast).